Here is a 264-residue protein sequence, read N- to C-terminus: Spermidine/putrescine transport system permease protein PotC (264 aa).

6 helical membrane passes run 10–30, 66–86, 109–129, 131–151, 176–196, and 232–252; these read FMTAIYAYLYIPIIILIVNSF, MAVFSATFATLIGSLTAVALY, IVMAISLLVLFMLLGIQLGFW, LLFSHITFCLPFVVVTVYSRL, IILPLAMPAVAAGWVLSFTLS, and ALATILLVLSLVMVIASQLIA. Residues 60–248 enclose the ABC transmembrane type-1 domain; sequence AQHSLTMAVF…VLSLVMVIAS (189 aa).

This sequence belongs to the binding-protein-dependent transport system permease family. CysTW subfamily.

The protein localises to the cell inner membrane. Functionally, required for the activity of the bacterial periplasmic transport system of putrescine and spermidine. This chain is Spermidine/putrescine transport system permease protein PotC (potC), found in Shigella flexneri.